The primary structure comprises 420 residues: Serine hydroxymethyltransferase (420 aa).

(6S)-5,6,7,8-tetrahydrofolate is bound by residues leucine 118 and 122–124 (GHL). Position 227 is an N6-(pyridoxal phosphate)lysine (lysine 227).

It belongs to the SHMT family. As to quaternary structure, homodimer. Requires pyridoxal 5'-phosphate as cofactor.

It is found in the cytoplasm. The enzyme catalyses (6R)-5,10-methylene-5,6,7,8-tetrahydrofolate + glycine + H2O = (6S)-5,6,7,8-tetrahydrofolate + L-serine. The protein operates within one-carbon metabolism; tetrahydrofolate interconversion. It participates in amino-acid biosynthesis; glycine biosynthesis; glycine from L-serine: step 1/1. Its function is as follows. Catalyzes the reversible interconversion of serine and glycine with tetrahydrofolate (THF) serving as the one-carbon carrier. This reaction serves as the major source of one-carbon groups required for the biosynthesis of purines, thymidylate, methionine, and other important biomolecules. Also exhibits THF-independent aldolase activity toward beta-hydroxyamino acids, producing glycine and aldehydes, via a retro-aldol mechanism. This chain is Serine hydroxymethyltransferase, found in Persephonella marina (strain DSM 14350 / EX-H1).